The sequence spans 388 residues: MAAGADVPCAVLALLVLGSLAAGGDATAGFIKSPLSQRRLTQDSVELHCEAVGSPIPEIQWWFEGNEPNETSAQLWDGAWQDRVQINATYNLHSTSTIYIANLTSDDSGTYECRASNDPDRNHLSKSPKVKWIRSQANVLVIERPVITGQYSSSADKVVLSCNISAPPTLIKGHKWMLGDKVLKTDESDASSYISYTIEGKVEDHSGVYECIYNTNPVAKGNVSIEVEPQVVAYKKSEHGNEGDVGVLTCKSPSYPPVDHWAWYKSGQTVPLESSAGIYNISRTGNKTELRILKLNIEQDMGDYSCNGTNMKGSGSATVNLRVRSRLAALWPFLGIVAEVLVLVTIIFIYEKRRKPDEVLDDDDGGSAPLKSNATNHKDKNVRQRNAN.

The N-terminal stretch at M1–A21 is a signal peptide. Residues T27–V323 lie on the Extracellular side of the membrane. The Ig-like domain maps to D43–K131. 2 cysteine pairs are disulfide-bonded: C49-C113 and C162-C211. The Ig-like C2-type domain maps to E143–V218. 5 N-linked (GlcNAc...) asparagine glycosylation sites follow: N163, N222, N280, N286, and N307. The region spanning P229–V323 is the Ig-like V-type domain. Cysteines 250 and 306 form a disulfide. The chain crosses the membrane as a helical span at residues R324–V344. Topologically, residues T345–N388 are cytoplasmic. The segment at E358–N388 is disordered.

As to quaternary structure, interacts with NXNL1, SLC2A1 and SLC16A1. Post-translationally, N-glycosylated. As to expression, retinal cone photoreceptors (at protein level). Brain endothelial cells, kidney epithelial cells and erythroblasts (at protein level).

It localises to the cell membrane. It is found in the photoreceptor inner segment. The protein localises to the cell projection. Its subcellular location is the cilium. The protein resides in the photoreceptor outer segment. It localises to the endoplasmic reticulum membrane. It is found in the basolateral cell membrane. Essential for normal retinal maturation and development. Acts as a retinal cell surface receptor for NXNL1 and plays an important role in NXNL1-mediated survival of retinal cone photoreceptors. In association with glucose transporter SLC16A1/GLUT1 and NXNL1, promotes retinal cone survival by enhancing aerobic glycolysis and accelerating the entry of glucose into photoreceptors. In terms of biological role, signaling receptor for cyclophilins, essential for PPIA/CYPA and PPIB/CYPB-dependent signaling related to chemotaxis and adhesion of immune cells. Plays an important role in targeting the monocarboxylate transporters SLC16A1/GLUT1, SLC16A3, SLC16A8, SLC16A11 and SLC16A12 to the plasma membrane. Acts as a coreceptor for vascular endothelial growth factor receptor 2 (KDR/VEGFR2) in endothelial cells enhancing its VEGFA-mediated activation and downstream signaling. Promotes angiogenesis through EPAS1/HIF2A-mediated up-regulation of VEGFA and KDR/VEGFR2 in endothelial cells. The chain is Basigin (BSG) from Gallus gallus (Chicken).